A 574-amino-acid polypeptide reads, in one-letter code: Pyruvate kinase PKLR (574 aa).

Phosphoserine occurs at positions 2, 19, 26, and 43. Residue Arg116 participates in substrate binding. Residues Asn118, Ser120, Asp156, and Thr157 each coordinate K(+). 118 to 121 is a binding site for ATP; the sequence is NFSH. The ATP site is built by Arg163 and Lys250. Residue Ser292 is modified to Phosphoserine. Substrate is bound at residue Lys313. Residue Glu315 coordinates Mn(2+). Residues Gly338, Asp339, and Thr371 each coordinate substrate. Asp339 contacts Mn(2+). Beta-D-fructose 1,6-bisphosphate is bound by residues 475–480, Trp525, Arg532, and 559–564; these read TTTGRS and RPGSGY.

This sequence belongs to the pyruvate kinase family. In terms of assembly, homotetramer. It depends on Mg(2+) as a cofactor. The cofactor is Mn(2+). K(+) is required as a cofactor.

The catalysed reaction is pyruvate + ATP = phosphoenolpyruvate + ADP + H(+). Its pathway is carbohydrate degradation; glycolysis; pyruvate from D-glyceraldehyde 3-phosphate: step 5/5. Allosterically activated by fructose 1,6-bisphosphate. Functionally, pyruvate kinase that catalyzes the conversion of phosphoenolpyruvate to pyruvate with the synthesis of ATP, and which plays a key role in glycolysis. In Homo sapiens (Human), this protein is Pyruvate kinase PKLR (PKLR).